The sequence spans 557 residues: ADP-ribosylation factor-binding protein GGA1 (557 aa).

The VHS domain maps to 29–165 (ACRSTLPEPD…LLKYKGYTFP (137 aa)). Residues 192-317 (ERAQAAKLEE…LLKRYKSIKG (126 aa)) enclose the GAT domain. Threonine 348 carries the post-translational modification Phosphothreonine. Serine 353, serine 357, serine 378, and serine 394 each carry phosphoserine. A GAE domain is found at 440–556 (AQSQRHILNQ…EESGTTSLPT (117 aa)).

As to quaternary structure, binds to ARF1 and ARF2.

Its subcellular location is the golgi apparatus. It localises to the trans-Golgi network. In terms of biological role, may play a role in the regulation of membrane traffic through the trans-Golgi network. The sequence is that of ADP-ribosylation factor-binding protein GGA1 (GGA1) from Saccharomyces cerevisiae (strain ATCC 204508 / S288c) (Baker's yeast).